Here is a 365-residue protein sequence, read N- to C-terminus: GTPase Obg (365 aa).

The region spanning 2 to 160 (ESFVDEVAIE…KFLRLSLKLL (159 aa)) is the Obg domain. In terms of domain architecture, OBG-type G spans 161 to 329 (ADVGIVGLPN…LLEAMDEAFF (169 aa)). Residues 167-174 (GLPNAGKS), 192-196 (FTTLS), 215-218 (DIPG), 282-285 (NKID), and 310-312 (SAD) contribute to the GTP site. 2 residues coordinate Mg(2+): Ser174 and Thr194.

Belongs to the TRAFAC class OBG-HflX-like GTPase superfamily. OBG GTPase family. As to quaternary structure, monomer. Mg(2+) is required as a cofactor.

It localises to the cytoplasm. An essential GTPase which binds GTP, GDP and possibly (p)ppGpp with moderate affinity, with high nucleotide exchange rates and a fairly low GTP hydrolysis rate. Plays a role in control of the cell cycle, stress response, ribosome biogenesis and in those bacteria that undergo differentiation, in morphogenesis control. In Leptospira borgpetersenii serovar Hardjo-bovis (strain JB197), this protein is GTPase Obg.